Reading from the N-terminus, the 123-residue chain is NADH-quinone oxidoreductase subunit A (123 aa).

A run of 3 helical transmembrane segments spans residues 6–26, 66–86, and 93–113; these read LTPYLPLAVVLLLAGGMAMLI, VVALLFIVFDVEAVFLYPWAV, and WFGYVEMLVFAVTLVVGLIYI.

The protein belongs to the complex I subunit 3 family. In terms of assembly, NDH-1 is composed of 14 different subunits. Subunits NuoA, H, J, K, L, M, N constitute the membrane sector of the complex.

It localises to the cell inner membrane. It carries out the reaction a quinone + NADH + 5 H(+)(in) = a quinol + NAD(+) + 4 H(+)(out). In terms of biological role, NDH-1 shuttles electrons from NADH, via FMN and iron-sulfur (Fe-S) centers, to quinones in the respiratory chain. The immediate electron acceptor for the enzyme in this species is believed to be ubiquinone. Couples the redox reaction to proton translocation (for every two electrons transferred, four hydrogen ions are translocated across the cytoplasmic membrane), and thus conserves the redox energy in a proton gradient. This is NADH-quinone oxidoreductase subunit A from Myxococcus xanthus (strain DK1622).